A 191-amino-acid polypeptide reads, in one-letter code: Ribonuclease HII (191 aa).

Residues 7–191 (ILMAGVDEVG…YSPVADLISK (185 aa)) enclose the RNase H type-2 domain. Positions 13, 14, and 103 each coordinate a divalent metal cation.

This sequence belongs to the RNase HII family. Mn(2+) is required as a cofactor. It depends on Mg(2+) as a cofactor.

Its subcellular location is the cytoplasm. It catalyses the reaction Endonucleolytic cleavage to 5'-phosphomonoester.. Its function is as follows. Endonuclease that specifically degrades the RNA of RNA-DNA hybrids. The chain is Ribonuclease HII from Legionella pneumophila (strain Paris).